Reading from the N-terminus, the 2034-residue chain is Sperm vesicle fusion protein fer-1 (2034 aa).

Residues Met-1 to Asp-80 are disordered. At Met-1–Gly-1998 the chain is on the cytoplasmic side. A compositionally biased stretch (acidic residues) spans Glu-66–Pro-79. C2 domains are found at residues Arg-229–Thr-367, Asp-954–Phe-1082, Tyr-1120–His-1246, and Lys-1363–Gly-1484. The interval Gln-1563 to Glu-1619 is disordered. Over residues Gln-1577 to Leu-1591 the composition is skewed to acidic residues. Positions Trp-1600–Lys-1611 are enriched in basic residues. In terms of domain architecture, C2 5 spans Glu-1684–Gly-1831. The tract at residues Gln-1953–Pro-1972 is disordered. Residues Leu-1999–Leu-2019 traverse the membrane as a helical segment. The Extracellular portion of the chain corresponds to His-2020–Phe-2034.

It belongs to the ferlin family. Exclusively expressed in the testis.

The protein resides in the membrane. In terms of biological role, required for the fusion of the membranous organelles (MOs) with the plasma membrane, a process essential in spermiogenesis. The protein is Sperm vesicle fusion protein fer-1 (fer-1) of Caenorhabditis elegans.